The primary structure comprises 76 residues: Vasotab-TY3 (76 aa).

A signal peptide spans Met1 to Asp21. A Kazal-like domain is found at Asp22–Lys76. Cystine bridges form between Cys23-Cys60, Cys27-Cys53, and Cys35-Cys75.

In terms of tissue distribution, expressed by the salivary gland.

The protein localises to the secreted. Its function is as follows. Vasodilator protein that inhibits vasoconstriction of isolated rat femoral artery induced by phenylephrine. Since platelet aggregation and vasoconstriction are key hemostatic responses, particularly in small wounds, this protein likely participates in the antihemostatic responses during blood feeding. Blocks L-type calcium channels (Cav1/CACNA1) in left ventricular myocytes isolated from rat hearts. The polypeptide is Vasotab-TY3 (Tabanus yao (Horsefly)).